The chain runs to 208 residues: Small ribosomal subunit protein uS9c (208 aa).

The N-terminal 51 residues, 1-51 (MAVSISSLTSSFASLSFTSNLTPKPQTLPMARTKPFSLSNPAVVKPLVITA), are a transit peptide targeting the chloroplast. Thr52 carries the N-acetylthreonine modification. Positions 185 to 208 (DSRIVERKKPGLKKARKAPQFSKR) are disordered. The segment covering 194–208 (PGLKKARKAPQFSKR) has biased composition (basic residues).

As to quaternary structure, component of the chloroplast small ribosomal subunit (SSU). Mature 70S chloroplast ribosomes of higher plants consist of a small (30S) and a large (50S) subunit. The 30S small subunit contains 1 molecule of ribosomal RNA (16S rRNA) and 24 different proteins. The 50S large subunit contains 3 rRNA molecules (23S, 5S and 4.5S rRNA) and 33 different proteins. uS9c binds directly to 16S ribosomal RNA. uS9c interacts with translation factor pY (PSRP1).

The protein localises to the plastid. Its subcellular location is the chloroplast. Its function is as follows. Component of the chloroplast ribosome (chloro-ribosome), a dedicated translation machinery responsible for the synthesis of chloroplast genome-encoded proteins, including proteins of the transcription and translation machinery and components of the photosynthetic apparatus. The sequence is that of Small ribosomal subunit protein uS9c (PRPS9) from Spinacia oleracea (Spinach).